Consider the following 482-residue polypeptide: Glutamyl-tRNA(Gln) amidotransferase subunit A (482 aa).

Active-site charge relay system residues include lysine 75 and serine 150. Residue serine 174 is the Acyl-ester intermediate of the active site.

The protein belongs to the amidase family. GatA subfamily. As to quaternary structure, heterotrimer of A, B and C subunits.

The catalysed reaction is L-glutamyl-tRNA(Gln) + L-glutamine + ATP + H2O = L-glutaminyl-tRNA(Gln) + L-glutamate + ADP + phosphate + H(+). Its function is as follows. Allows the formation of correctly charged Gln-tRNA(Gln) through the transamidation of misacylated Glu-tRNA(Gln) in organisms which lack glutaminyl-tRNA synthetase. The reaction takes place in the presence of glutamine and ATP through an activated gamma-phospho-Glu-tRNA(Gln). The chain is Glutamyl-tRNA(Gln) amidotransferase subunit A from Acaryochloris marina (strain MBIC 11017).